The primary structure comprises 257 residues: RLA class II histocompatibility antigen, DP beta chain (257 aa).

Positions 1 to 29 (MRPCRSLRTAALAVVLTVLLHPVALGRAT) are cleaved as a signal peptide. The beta-1 stretch occupies residues 30–120 (PGESEQNYLW…LFQGLPVLLQ (91 aa)). Over 30 to 224 (PGESEQNYLW…KAQSDSARSK (195 aa)) the chain is Extracellular. 2 disulfide bridges follow: C45–C105 and C143–C199. N-linked (GlcNAc...) asparagine glycosylation occurs at N49. The tract at residues 121 to 214 (TQPRVSVSPS…SLDSPITVEW (94 aa)) is beta-2. Residues 123–211 (PRVSVSPSKK…EHPSLDSPIT (89 aa)) enclose the Ig-like C1-type domain. The interval 215-224 (KAQSDSARSK) is connecting peptide. The helical transmembrane segment at 225–245 (MLAGVGGLVLGLVSLAVGVFM) threads the bilayer. At 246–257 (HRRSKKAQQGCR) the chain is on the cytoplasmic side.

This sequence belongs to the MHC class II family.

It localises to the membrane. In Oryctolagus cuniculus (Rabbit), this protein is RLA class II histocompatibility antigen, DP beta chain.